Here is a 184-residue protein sequence, read N- to C-terminus: ATP synthase subunit b, chloroplastic (184 aa).

The helical transmembrane segment at 27–49 (LATNLINLSVVLGVLIFFGKGVL) threads the bilayer.

It belongs to the ATPase B chain family. As to quaternary structure, F-type ATPases have 2 components, F(1) - the catalytic core - and F(0) - the membrane proton channel. F(1) has five subunits: alpha(3), beta(3), gamma(1), delta(1), epsilon(1). F(0) has four main subunits: a(1), b(1), b'(1) and c(10-14). The alpha and beta chains form an alternating ring which encloses part of the gamma chain. F(1) is attached to F(0) by a central stalk formed by the gamma and epsilon chains, while a peripheral stalk is formed by the delta, b and b' chains.

The protein localises to the plastid. Its subcellular location is the chloroplast thylakoid membrane. F(1)F(0) ATP synthase produces ATP from ADP in the presence of a proton or sodium gradient. F-type ATPases consist of two structural domains, F(1) containing the extramembraneous catalytic core and F(0) containing the membrane proton channel, linked together by a central stalk and a peripheral stalk. During catalysis, ATP synthesis in the catalytic domain of F(1) is coupled via a rotary mechanism of the central stalk subunits to proton translocation. Functionally, component of the F(0) channel, it forms part of the peripheral stalk, linking F(1) to F(0). The chain is ATP synthase subunit b, chloroplastic from Lactuca sativa (Garden lettuce).